The chain runs to 142 residues: MGKTRGMGAGRKLKQLRITQRWADKHYKKSNRGNEWKKPFACSSHAKGIVLEKIGIEAKQPNSAIRKCARVQLIKNGKKIAAFVPNDGCLNYIEENDEVLIAGFGRKGHAVGDIPGVRFKVVKVSGVSLLALFKEKKEKPRS.

The residue at position 61 (proline 61) is a Hydroxyproline.

Belongs to the universal ribosomal protein uS12 family.

This Arabidopsis thaliana (Mouse-ear cress) protein is Small ribosomal subunit protein uS12z (RPS23A).